Consider the following 608-residue polypeptide: Nuclear receptor subfamily 2 group C member 1 (608 aa).

Positions 1-179 (MASIEEIAHQ…RLQRCIAFGM (179 aa)) are required for interaction with KAT2B. Residues 111–186 (FDLCVVCGDK…FGMKQDSVQC (76 aa)) constitute a DNA-binding region (nuclear receptor). NR C4-type zinc fingers lie at residues 114-134 (CVVC…CEGC) and 150-169 (CRGS…CQYC). Ser-198 and Ser-216 each carry phosphoserine. Thr-221 carries the phosphothreonine modification. Thr-223 bears the Phosphothreonine; by MAPK1 mark. Lys-251 is covalently cross-linked (Glycyl lysine isopeptide (Lys-Gly) (interchain with G-Cter in SUMO); alternate). Lys-251 is covalently cross-linked (Glycyl lysine isopeptide (Lys-Gly) (interchain with G-Cter in SUMO2); alternate). One can recognise an NR LBD domain in the interval 353–595 (GNVHLIAGDS…SVIPHILKME (243 aa)). At Ser-586 the chain carries Phosphoserine; by PKC. The interval 589–608 (PHILKMEPADYNSQIIGHSI) is required for interaction with NRIP1. Lys-593 participates in a covalent cross-link: Glycyl lysine isopeptide (Lys-Gly) (interchain with G-Cter in SUMO2).

Belongs to the nuclear hormone receptor family. NR2 subfamily. Homodimer. Heterodimer; with NR2C2 which is required for chromatin remodeling and for binding to promoter regions such as globin DR1 repeats. Interacts with ESR1; the interaction prevents homodimerization of ESR1 and suppresses its transcriptional activity and cell growth. Interacts with NRIP1 (via its LXXLL motifs); the interaction provides corepressor activity. Interacts with HDAC3 (via the DNA-binding domain); the interaction recruits phosphorylated NR2C1 to PML bodies for sumoylation. Interacts with HDAC4 (via the DNA-binding domain). Interacts with PIAS1; the interaction is required for sumoylation of NR2C1. Interacts with UBE2I; the interaction is required for sumoylation of NR2C1. Interacts with KAT2B; the interaction acts as a corepressor of gene expression. In terms of processing, sumoylation requires both PIAS1 and UBE2I. Sumoylation appears to dissociate NR2C1 from the PML nuclear bodies. Enhances the interaction with NRIP1 but inhibits interaction with KAT2B. In proliferating cells, stimulation by all-trans retinoic acid, activation of MAPK1-mediated phosphorylation and recruitment to PML bodies with subsequent sumoylation, suppresses OCT4 expression. Post-translationally, phosphorylated on several serine and threonine residues. Phosphorylation on Thr-223, stimulated by all-trans retinoic acid (atRA) mediates PML location and sumoylation in proliferating cells which then modulates its association with effector molecules, KAT2B and NRIP1. Phosphorylation on Ser-586 by PKC is important for protein stability and function as activator of RARB.

It localises to the nucleus. It is found in the PML body. Its function is as follows. Orphan nuclear receptor. Binds the IR7 element in the promoter of its own gene in an autoregulatory negative feedback mechanism. Primarily repressor of a broad range of genes including ESR1 and RARB. Together with NR2C2, forms the core of the DRED (direct repeat erythroid-definitive) complex that represses embryonic and fetal globin transcription. Binds to hormone response elements (HREs) consisting of two 5'-AGGTCA-3' half site direct repeat consensus sequences. Also activator of OCT4 gene expression. Plays a fundamental role in early embryogenesis and regulates embryonic stem cell proliferation and differentiation. Mediator of retinoic acid-regulated preadipocyte proliferation. The chain is Nuclear receptor subfamily 2 group C member 1 (NR2C1) from Bos taurus (Bovine).